We begin with the raw amino-acid sequence, 313 residues long: Cyclin-dependent kinase B2-1 (313 aa).

Met1 is modified (N-acetylmethionine). Residues 14–304 (FEKLEKVGEG…AKMAMEHPYF (291 aa)) enclose the Protein kinase domain. Residues 20-28 (VGEGTYGKV) and Lys43 each bind ATP. Tyr25 is subject to Phosphotyrosine. The active-site Proton acceptor is Asp145. A Phosphothreonine modification is found at Thr179.

It belongs to the protein kinase superfamily. CMGC Ser/Thr protein kinase family. CDC2/CDKX subfamily. As to quaternary structure, interacts with CYCD4-1 and CKS1. Expressed in root tips, shoot apical meristem, leaf primordia vascular tissues and tapetum of anthers.

It carries out the reaction L-seryl-[protein] + ATP = O-phospho-L-seryl-[protein] + ADP + H(+). The enzyme catalyses L-threonyl-[protein] + ATP = O-phospho-L-threonyl-[protein] + ADP + H(+). It catalyses the reaction [DNA-directed RNA polymerase] + ATP = phospho-[DNA-directed RNA polymerase] + ADP + H(+). The chain is Cyclin-dependent kinase B2-1 (CDKB2-1) from Arabidopsis thaliana (Mouse-ear cress).